The chain runs to 201 residues: LexA repressor (201 aa).

The H-T-H motif DNA-binding region spans 28 to 48; the sequence is RAEIANQLGFRSANAAEEHLK. Residues Ser-118 and Lys-155 each act as for autocatalytic cleavage activity in the active site.

It belongs to the peptidase S24 family. In terms of assembly, homodimer.

The enzyme catalyses Hydrolysis of Ala-|-Gly bond in repressor LexA.. Its function is as follows. Represses a number of genes involved in the response to DNA damage (SOS response), including recA and lexA. In the presence of single-stranded DNA, RecA interacts with LexA causing an autocatalytic cleavage which disrupts the DNA-binding part of LexA, leading to derepression of the SOS regulon and eventually DNA repair. This Saccharophagus degradans (strain 2-40 / ATCC 43961 / DSM 17024) protein is LexA repressor.